Consider the following 442-residue polypeptide: Putative amino acid transporter YuiF (442 aa).

11 helical membrane-spanning segments follow: residues 21 to 41 (IVIA…LGLG), 51 to 71 (LGGN…AAAL), 103 to 123 (LIVL…PVHI), 146 to 166 (LIAC…PVGF), 190 to 210 (IPYA…LSVI), 236 to 256 (IGIA…LSQT), 259 to 279 (VEGM…SGVM), 292 to 312 (MVLM…SNVL), 335 to 355 (LGAL…GSSF), 364 to 384 (IFVP…AIIG), and 421 to 441 (VPTF…AALV).

Its subcellular location is the cell membrane. This is Putative amino acid transporter YuiF (yuiF) from Bacillus subtilis (strain 168).